The sequence spans 574 residues: Glutamyl-tRNA(Gln) amidotransferase subunit B, mitochondrial (574 aa).

This sequence belongs to the GatB/GatE family. GatB subfamily. In terms of assembly, subunit of the heterotrimeric GatCAB amidotransferase (AdT) complex, composed of A, B and C subunits.

It localises to the mitochondrion. The enzyme catalyses L-glutamyl-tRNA(Gln) + L-glutamine + ATP + H2O = L-glutaminyl-tRNA(Gln) + L-glutamate + ADP + phosphate + H(+). Allows the formation of correctly charged Gln-tRNA(Gln) through the transamidation of misacylated Glu-tRNA(Gln) in the mitochondria. The reaction takes place in the presence of glutamine and ATP through an activated gamma-phospho-Glu-tRNA(Gln). This Phytophthora infestans (strain T30-4) (Potato late blight agent) protein is Glutamyl-tRNA(Gln) amidotransferase subunit B, mitochondrial.